The following is a 152-amino-acid chain: UPF0225 protein YchJ (152 aa).

Belongs to the UPF0225 family.

The sequence is that of UPF0225 protein YchJ from Escherichia coli O139:H28 (strain E24377A / ETEC).